A 181-amino-acid polypeptide reads, in one-letter code: Peptidyl-tRNA hydrolase (181 aa).

Residue Tyr14 participates in tRNA binding. His19 acts as the Proton acceptor in catalysis. TRNA is bound by residues Tyr60, Asn62, and Asn108.

The protein belongs to the PTH family. In terms of assembly, monomer.

It localises to the cytoplasm. It catalyses the reaction an N-acyl-L-alpha-aminoacyl-tRNA + H2O = an N-acyl-L-amino acid + a tRNA + H(+). Hydrolyzes ribosome-free peptidyl-tRNAs (with 1 or more amino acids incorporated), which drop off the ribosome during protein synthesis, or as a result of ribosome stalling. Functionally, catalyzes the release of premature peptidyl moieties from peptidyl-tRNA molecules trapped in stalled 50S ribosomal subunits, and thus maintains levels of free tRNAs and 50S ribosomes. The sequence is that of Peptidyl-tRNA hydrolase from Metamycoplasma arthritidis (strain 158L3-1) (Mycoplasma arthritidis).